We begin with the raw amino-acid sequence, 504 residues long: UDP-glycosyltransferase UGT4 (504 aa).

Residues 1-23 (MTLLRDLLLLYINSLLFINPSIG) form the signal peptide. The Lumenal segment spans residues 24–474 (ENILVFLPTK…SAVIDLYWFQ (451 aa)). 4 N-linked (GlcNAc...) asparagine glycosylation sites follow: asparagine 54, asparagine 66, asparagine 69, and asparagine 422. The helical transmembrane segment at 475–495 (YILLDIILFYSLIVLILLCIL) threads the bilayer. Topologically, residues 496 to 504 (RIFFRMLTK) are cytoplasmic.

It belongs to the UDP-glycosyltransferase family.

The protein localises to the microsome membrane. Its function is as follows. Catalyzes the transfer of a glycosyl group from a UDP-sugar to an acceptor molecule. The protein is UDP-glycosyltransferase UGT4 of Dactylopius coccus (Cochineal).